The chain runs to 330 residues: T-cell surface glycoprotein CD1b4 (330 aa).

Positions 1 to 15 (MLLLALAFFFPAGDT) are cleaved as a signal peptide. The Extracellular segment spans residues 16–299 (QNVLPGKISF…LYWGHSISIG (284 aa)). Asparagine 35, asparagine 72, and asparagine 143 each carry an N-linked (GlcNAc...) asparagine glycan. Disulfide bonds link cysteine 117-cysteine 181 and cysteine 221-cysteine 276. The region spanning 182–292 (PRYLMSVIEA…LEGQDIILYW (111 aa)) is the Ig-like domain. Residues 300 to 320 (WIILAVLVPCLIVLVLFILWF) traverse the membrane as a helical segment. Residues 321-330 (YRRWSYEDIF) are Cytoplasmic-facing. An Internalization signal motif is present at residues 326–329 (YEDI).

As to quaternary structure, heterodimer with B2M (beta-2-microglobulin). Interacts with saposin C.

It localises to the cell membrane. Its subcellular location is the endosome membrane. It is found in the lysosome membrane. Functionally, antigen-presenting protein that binds self and non-self lipid and glycolipid antigens and presents them to T-cell receptors on natural killer T-cells. This chain is T-cell surface glycoprotein CD1b4 (CD1B4), found in Cavia porcellus (Guinea pig).